Reading from the N-terminus, the 190-residue chain is Protein GrpE (190 aa).

Basic and acidic residues predominate over residues 1-31; the sequence is MTEEQKKYEDAENLESKSENPEEASAEKSEN. A disordered region spans residues 1-39; that stretch reads MTEEQKKYEDAENLESKSENPEEASAEKSENGVEDLQAE.

This sequence belongs to the GrpE family. As to quaternary structure, homodimer.

It localises to the cytoplasm. In terms of biological role, participates actively in the response to hyperosmotic and heat shock by preventing the aggregation of stress-denatured proteins, in association with DnaK and GrpE. It is the nucleotide exchange factor for DnaK and may function as a thermosensor. Unfolded proteins bind initially to DnaJ; upon interaction with the DnaJ-bound protein, DnaK hydrolyzes its bound ATP, resulting in the formation of a stable complex. GrpE releases ADP from DnaK; ATP binding to DnaK triggers the release of the substrate protein, thus completing the reaction cycle. Several rounds of ATP-dependent interactions between DnaJ, DnaK and GrpE are required for fully efficient folding. The protein is Protein GrpE of Zymomonas mobilis subsp. mobilis (strain ATCC 31821 / ZM4 / CP4).